The chain runs to 195 residues: Thymidine kinase (195 aa).

ATP-binding positions include 8–15 and 86–89; these read GLMGSGKS and DESQ. Catalysis depends on Glu-87, which acts as the Proton acceptor. Residues Cys-146, Cys-151, Cys-184, and His-187 each contribute to the Zn(2+) site.

The protein belongs to the thymidine kinase family. In terms of assembly, homotetramer.

The protein resides in the cytoplasm. The catalysed reaction is thymidine + ATP = dTMP + ADP + H(+). The polypeptide is Thymidine kinase (tdk) (Bacillus subtilis subsp. natto).